A 179-amino-acid polypeptide reads, in one-letter code: GTP-dependent dephospho-CoA kinase (179 aa).

D43, V45, D62, E120, and D143 together coordinate GTP.

It belongs to the GTP-dependent DPCK family.

It carries out the reaction 3'-dephospho-CoA + GTP = GDP + CoA + H(+). The protein operates within cofactor biosynthesis; coenzyme A biosynthesis. Catalyzes the GTP-dependent phosphorylation of the 3'-hydroxyl group of dephosphocoenzyme A to form coenzyme A (CoA). This chain is GTP-dependent dephospho-CoA kinase, found in Haloarcula marismortui (strain ATCC 43049 / DSM 3752 / JCM 8966 / VKM B-1809) (Halobacterium marismortui).